The primary structure comprises 442 residues: GTPase Der (442 aa).

EngA-type G domains lie at 2-168 (ATVL…EEAG) and 182-356 (LKVA…EKID). GTP-binding positions include 8–15 (GRPNVGKS), 55–59 (DTCGL), 118–121 (NKVE), 188–195 (GKPNAGKS), 235–239 (DTAGM), and 301–304 (NKSD). One can recognise a KH-like domain in the interval 357–442 (LRIPTGLLNN…PIFIKLRRKK (86 aa)).

This sequence belongs to the TRAFAC class TrmE-Era-EngA-EngB-Septin-like GTPase superfamily. EngA (Der) GTPase family. In terms of assembly, associates with the 50S ribosomal subunit.

Its function is as follows. GTPase that plays an essential role in the late steps of ribosome biogenesis. The sequence is that of GTPase Der from Kosmotoga olearia (strain ATCC BAA-1733 / DSM 21960 / TBF 19.5.1).